The primary structure comprises 253 residues: 5'/3'-nucleotidase SurE (253 aa).

A divalent metal cation is bound by residues aspartate 8, aspartate 9, serine 39, and asparagine 92.

This sequence belongs to the SurE nucleotidase family. The cofactor is a divalent metal cation.

It is found in the cytoplasm. It catalyses the reaction a ribonucleoside 5'-phosphate + H2O = a ribonucleoside + phosphate. The enzyme catalyses a ribonucleoside 3'-phosphate + H2O = a ribonucleoside + phosphate. The catalysed reaction is [phosphate](n) + H2O = [phosphate](n-1) + phosphate + H(+). Its function is as follows. Nucleotidase with a broad substrate specificity as it can dephosphorylate various ribo- and deoxyribonucleoside 5'-monophosphates and ribonucleoside 3'-monophosphates with highest affinity to 3'-AMP. Also hydrolyzes polyphosphate (exopolyphosphatase activity) with the preference for short-chain-length substrates (P20-25). Might be involved in the regulation of dNTP and NTP pools, and in the turnover of 3'-mononucleotides produced by numerous intracellular RNases (T1, T2, and F) during the degradation of various RNAs. This Escherichia coli O127:H6 (strain E2348/69 / EPEC) protein is 5'/3'-nucleotidase SurE.